We begin with the raw amino-acid sequence, 193 residues long: 21 kDa protein (193 aa).

An N-terminal signal peptide occupies residues 1–22 (MKLSKSTLVFSALLVILAAASA).

The polypeptide is 21 kDa protein (Daucus carota (Wild carrot)).